Here is a 91-residue protein sequence, read N- to C-terminus: C-C motif chemokine 5 (91 aa).

An N-terminal signal peptide occupies residues 1–23; it reads MKVSAARLAVILVATALCAPASA. Cystine bridges form between cysteine 33-cysteine 57 and cysteine 34-cysteine 73.

Belongs to the intercrine beta (chemokine CC) family.

The protein localises to the secreted. Its function is as follows. Chemoattractant for blood monocytes, memory T-helper cells and eosinophils. Causes the release of histamine from basophils and activates eosinophils. May activate several chemokine receptors including CCR1, CCR3, CCR4 and CCR5. May also be an agonist of the G protein-coupled receptor GPR75. Together with GPR75, may play a role in neuron survival through activation of a downstream signaling pathway involving the PI3, Akt and MAP kinases. By activating GPR75 may also play a role in insulin secretion by islet cells. The chain is C-C motif chemokine 5 (CCL5) from Macaca mulatta (Rhesus macaque).